The sequence spans 31 residues: IKFEPPLPPKKAHKKFWEDDGIYYPPNHNFP.

It belongs to the flavin monoamine oxidase family. FIG1 subfamily. Homodimer; non-covalently linked. FAD serves as cofactor. N-glycosylated. As to expression, expressed by the venom gland.

It is found in the secreted. It carries out the reaction an L-alpha-amino acid + O2 + H2O = a 2-oxocarboxylate + H2O2 + NH4(+). The catalysed reaction is L-leucine + O2 + H2O = 4-methyl-2-oxopentanoate + H2O2 + NH4(+). It catalyses the reaction L-phenylalanine + O2 + H2O = 3-phenylpyruvate + H2O2 + NH4(+). The enzyme catalyses L-histidine + O2 + H2O = 3-(imidazol-5-yl)pyruvate + H2O2 + NH4(+). Catalyzes an oxidative deamination of predominantly hydrophobic and aromatic L-amino acids, thus producing hydrogen peroxide that may contribute to the diverse toxic effects of this enzyme. Is moderately active on L-Leu, L-His, and L-Phe, and very weakly active on L-Thr, and L-Cys. Exhibits diverse biological activities, such as hemorrhage, hemolysis, edema, antibacterial and antiparasitic activities, as well as regulation of platelet aggregation. Its effect on platelets is controversial, since it either induces aggregation or inhibits agonist-induced aggregation. These different effects are probably due to different experimental conditions. Inhibits growth of B.subtilis strain ATCC 6633 (MIC=32 uM), E.faecalis strain ATCC 12953 (MIC=32 uM), S.aureus strain ATCC 29213 (MIC=32 uM), S.pyogenes strain ATCC 19615 (MIC=8 uM), E.coli strain ATCC 8739 (MIC=4 uM), K.pneumoniae strain ATCC 13885 (MIC=2 uM), P.mirabilis strain ATCC 25933 (MIC=2 uM), P.aeruginosa strain ATCC 15442 (MIC=8 uM) and S.typhimurium strain ATCC 14028 (MIC=8 uM). The polypeptide is L-amino-acid oxidase (Bothrops mattogrossensis (Pitviper)).